Consider the following 787-residue polypeptide: Signal transducer and activator of transcription 5B (787 aa).

Tyrosine 90 is modified (phosphotyrosine). At serine 128 the chain carries Phosphoserine. The SH2 domain maps to 589-686 (WNDGAILGFV…EVYSKYYTPV (98 aa)). Tyrosine 682 is modified (phosphotyrosine). Tyrosine 699 carries the post-translational modification Phosphotyrosine; by HCK, JAK and PTK6.

This sequence belongs to the transcription factor STAT family. In terms of assembly, upon activation, forms a homodimer or a heterodimer with a related family member. Binds NR3C1. Interacts with NCOA1. Interacts with NMI. Interacts with SOCS7. Interacts (via SH2 domain) with INSR. Interacts with CPEB3; this inhibits STAT5B-mediated transcriptional activation. Post-translationally, tyrosine phosphorylated in response to signaling via activated KIT, resulting in translocation to the nucleus. Tyrosine phosphorylated in response to signaling via activated FLT3; wild-type FLT3 results in much weaker phosphorylation than constitutively activated mutant FLT3. Alternatively, can be phosphorylated by JAK2. Phosphorylation at Tyr-699 by PTK6 or HCK leads to an increase of its transcriptional activity.

The protein resides in the cytoplasm. It is found in the nucleus. Functionally, carries out a dual function: signal transduction and activation of transcription. Mediates cellular responses to the cytokine KITLG/SCF and other growth factors. Binds to the GAS element and activates PRL-induced transcription. Positively regulates hematopoietic/erythroid differentiation. The chain is Signal transducer and activator of transcription 5B (STAT5B) from Bos taurus (Bovine).